A 467-amino-acid polypeptide reads, in one-letter code: Ribulose bisphosphate carboxylase large chain (467 aa).

Lys-5 carries the N6,N6,N6-trimethyllysine modification. Residues Asn-114 and Thr-164 each contribute to the substrate site. Lys-166 serves as the catalytic Proton acceptor. Position 168 (Lys-168) interacts with substrate. Lys-192, Asp-194, and Glu-195 together coordinate Mg(2+). Lys-192 is subject to N6-carboxylysine. Residue His-285 is the Proton acceptor of the active site. 3 residues coordinate substrate: Arg-286, His-318, and Ser-370.

It belongs to the RuBisCO large chain family. Type I subfamily. As to quaternary structure, heterohexadecamer of 8 large chains and 8 small chains; disulfide-linked. The disulfide link is formed within the large subunit homodimers. The cofactor is Mg(2+). The disulfide bond which can form in the large chain dimeric partners within the hexadecamer appears to be associated with oxidative stress and protein turnover.

Its subcellular location is the plastid. It is found in the chloroplast. It catalyses the reaction 2 (2R)-3-phosphoglycerate + 2 H(+) = D-ribulose 1,5-bisphosphate + CO2 + H2O. The catalysed reaction is D-ribulose 1,5-bisphosphate + O2 = 2-phosphoglycolate + (2R)-3-phosphoglycerate + 2 H(+). Functionally, ruBisCO catalyzes two reactions: the carboxylation of D-ribulose 1,5-bisphosphate, the primary event in carbon dioxide fixation, as well as the oxidative fragmentation of the pentose substrate in the photorespiration process. Both reactions occur simultaneously and in competition at the same active site. This chain is Ribulose bisphosphate carboxylase large chain, found in Eriodictyon californicum (California yerba santa).